A 225-amino-acid chain; its full sequence is Uracil-DNA glycosylase (225 aa).

Asp68 serves as the catalytic Proton acceptor.

The protein belongs to the uracil-DNA glycosylase (UDG) superfamily. UNG family.

The protein localises to the cytoplasm. It catalyses the reaction Hydrolyzes single-stranded DNA or mismatched double-stranded DNA and polynucleotides, releasing free uracil.. Functionally, excises uracil residues from the DNA which can arise as a result of misincorporation of dUMP residues by DNA polymerase or due to deamination of cytosine. In Parafrankia sp. (strain EAN1pec), this protein is Uracil-DNA glycosylase.